The following is a 522-amino-acid chain: Sugar transport protein 1 (522 aa).

At 1–22 (MPAGGFVVGDGQKAYPGKLTPF) the chain is on the cytoplasmic side. Residues 23–43 (VLFTCVVAAMGGLIFGYDIGI) form a helical membrane-spanning segment. At 44–79 (SGGVTSMPSFLKRFFPSVYRKQQEDASTNQYCQYDS) the chain is on the extracellular side. The chain crosses the membrane as a helical span at residues 80–100 (PTLTMFTSSLYLAALISSLVA). The Cytoplasmic portion of the chain corresponds to 101–117 (STVTRKFGRRLSMLFGG). A helical membrane pass occupies residues 118-138 (ILFCAGALINGFAKHVWMLIV). At 139–140 (GR) the chain is on the extracellular side. Residues 141–161 (ILLGFGIGFANQAVPLYLSEM) form a helical membrane-spanning segment. The Cytoplasmic portion of the chain corresponds to 162-171 (APYKYRGALN). The helical transmembrane segment at 172–192 (IGFQLSITIGILVAEVLNYFF) threads the bilayer. The Extracellular portion of the chain corresponds to 193-202 (AKIKGGWGWR). A helical membrane pass occupies residues 203–223 (LSLGGAVVPALIITIGSLVLP). Residues 224–289 (DTPNSMIERG…YRPHLTMAVM (66 aa)) lie on the Cytoplasmic side of the membrane. Position 252 is a phosphoserine (serine 252). Residues 290-310 (IPFFQQLTGINVIMFYAPVLF) traverse the membrane as a helical segment. Topologically, residues 311–321 (NTIGFTTDASL) are extracellular. The chain crosses the membrane as a helical span at residues 322–342 (MSAVVTGSVNVAATLVSIYGV). Residues 343–348 (DRWGRR) are Cytoplasmic-facing. The chain crosses the membrane as a helical span at residues 349–369 (FLFLEGGTQMLICQAVVAACI). At 370–384 (GAKFGVDGTPGELPK) the chain is on the extracellular side. The helical transmembrane segment at 385–405 (WYAIVVVTFICIYVAGFAWSW) threads the bilayer. Over 406–427 (GPLGWLVPSEIFPLEIRSAAQS) the chain is Cytoplasmic. Residues 428–448 (ITVSVNMIFTFIIAQIFLTML) traverse the membrane as a helical segment. Residues 449–452 (CHLK) are Extracellular-facing. Residues 453–473 (FGLFLVFAFFVVVMSIFVYIF) traverse the membrane as a helical segment. The Cytoplasmic segment spans residues 474–522 (LPETKGIPIEEMGQVWRSHWYWSRFVEDGEYGNALEMGKNSNQAGTKHV).

This sequence belongs to the major facilitator superfamily. Sugar transporter (TC 2.A.1.1) family. Mostly expressed in young leaves, especially in guard cells (at protein level). Also present in roots.

Its subcellular location is the cell membrane. Functionally, major hexose transporter. Mediates an active uptake of hexoses, by sugar/hydrogen symport. Can transport glucose, 3-O-methylglucose, fructose, xylose, mannose, galactose, fucose, 2-deoxyglucose and arabinose. Confers sensitivity to galactose in seedlings. The sequence is that of Sugar transport protein 1 (STP1) from Arabidopsis thaliana (Mouse-ear cress).